The sequence spans 462 residues: Protein phosphatase 1M (462 aa).

Residues 1-10 (MSAGWFRRRF) are compositionally biased toward basic residues. The interval 1–66 (MSAGWFRRRF…PVRSPARGRT (66 aa)) is disordered. A PPM-type phosphatase domain is found at 100–452 (EFGIEEDQEW…DDVSVFVIPL (353 aa)). Mn(2+)-binding residues include Asp127 and Gly128.

Belongs to the PP2C family. Requires Mg(2+) as cofactor. The cofactor is Mn(2+). Widely expressed with highest levels in testis and lower levels in lung, kidney and brain.

It is found in the nucleus. It catalyses the reaction O-phospho-L-seryl-[protein] + H2O = L-seryl-[protein] + phosphate. The enzyme catalyses O-phospho-L-threonyl-[protein] + H2O = L-threonyl-[protein] + phosphate. The polypeptide is Protein phosphatase 1M (Mus musculus (Mouse)).